An 82-amino-acid chain; its full sequence is uncharacterized protein (82 aa).

This is an uncharacterized protein from Anabaena cylindrica.